Reading from the N-terminus, the 102-residue chain is Movement protein (102 aa).

A helical transmembrane segment spans residues 43–63 (VVALIVILFAVGIVYLAYTLF). The tract at residues 82 to 102 (IGFGNTPLRRPGEGNPNGGPV) is disordered.

It belongs to the mastrevirus movement protein family. In terms of assembly, interacts with the capsid protein (CP). Part of a MP-CP-viral DNA complex.

The protein localises to the host membrane. Functionally, involved in the viral transport within, and between cells. This Tobacco yellow dwarf virus (strain Australia) (TYDV) protein is Movement protein.